Reading from the N-terminus, the 1055-residue chain is Vacuolar protein sorting-associated protein 54 (1055 aa).

A coiled-coil region spans residues 363–383 (TKKIIEVHQKYEQKKHLLAKL). A disordered region spans residues 774-794 (IDDGPTKKPFKRTGSSATIDS).

It belongs to the VPS54 family. As to quaternary structure, component of the Golgi-associated retrograde protein (GARP) complex, also called VFT (VPS fifty-three) complex, composed of VPS51, VPS52, VPS53 and VPS54.

The protein resides in the golgi apparatus. Its subcellular location is the trans-Golgi network. Functionally, acts as a component of the GARP complex that is involved in retrograde transport from early and late endosomes to the trans-Golgi network (TGN). The GARP complex facilitates tethering as well as SNARE complex assembly at the Golgi. The sequence is that of Vacuolar protein sorting-associated protein 54 (vps-54) from Caenorhabditis briggsae.